A 54-amino-acid chain; its full sequence is uncharacterized protein (54 aa).

The N-terminal stretch at methionine 1 to serine 23 is a signal peptide.

This is an uncharacterized protein from Acheta domesticus (House cricket).